Consider the following 410-residue polypeptide: BTB and MATH domain-containing protein 42 (410 aa).

Residues methionine 1–serine 19 show a composition bias toward polar residues. The interval methionine 1–arginine 29 is disordered. The MATH domain maps to serine 45 to valine 173. The BTB domain occupies threonine 219 to glutamate 287. The segment at threonine 389–lysine 410 is disordered. The segment covering alanine 401–lysine 410 has biased composition (basic residues).

Interacts with cul-3.

Its pathway is protein modification; protein ubiquitination. In terms of biological role, probable substrate-specific adapter of an E3 ubiquitin-protein ligase complex which mediates the ubiquitination and subsequent proteasomal degradation of target proteins. This chain is BTB and MATH domain-containing protein 42 (bath-42), found in Caenorhabditis elegans.